The following is a 304-amino-acid chain: Putative S-adenosyl-L-methionine-dependent methyltransferase MUL_0816 (304 aa).

Residues Asp-130 and 159 to 160 (DL) contribute to the S-adenosyl-L-methionine site.

This sequence belongs to the UPF0677 family.

Exhibits S-adenosyl-L-methionine-dependent methyltransferase activity. This Mycobacterium ulcerans (strain Agy99) protein is Putative S-adenosyl-L-methionine-dependent methyltransferase MUL_0816.